The chain runs to 83 residues: Apolipoprotein C-I, basic form (83 aa).

The first 26 residues, 1 to 26 (MRLFLSLPVLVVVLSMVLEGPAPVQG), serve as a signal peptide directing secretion.

It belongs to the apolipoprotein C1 family.

Its subcellular location is the secreted. Its function is as follows. Inhibitor of lipoprotein binding to the low density lipoprotein (LDL) receptor, LDL receptor-related protein, and very low density lipoprotein (VLDL) receptor. Associates with high density lipoproteins (HDL) and the triacylglycerol-rich lipoproteins in the plasma and makes up about 10% of the protein of the VLDL and 2% of that of HDL. Appears to interfere directly with fatty acid uptake and is also the major plasma inhibitor of cholesteryl ester transfer protein (CETP). Binds free fatty acids and reduces their intracellular esterification. Modulates the interaction of APOE with beta-migrating VLDL and inhibits binding of beta-VLDL to the LDL receptor-related protein. The sequence is that of Apolipoprotein C-I, basic form (APOC1) from Papio anubis (Olive baboon).